The sequence spans 1253 residues: Guanine nucleotide exchange factor SDC25 (1253 aa).

Positions 26-98 constitute an SH3 domain; the sequence is QPIDVVECTY…PPSFTRSILN (73 aa). The disordered stretch occupies residues 624–649; it reads LNLDNAKDKKNGSQNTDIQEEEDEYE. Residues 782–914 enclose the N-terminal Ras-GEF domain; that stretch reads GPIVRIKGGS…ELLKEVNQKF (133 aa). The 248-residue stretch at 952-1199 folds into the Ras-GEF domain; sequence VDPVLFATQL…QYQLSLIIEP (248 aa). Positions 1202–1253 are disordered; the sequence is RKKVVPNSNSNNKSQEKSRDDQTDEGKTSTKKDRFPKFQLHKTKKKAPKVSK. The span at 1215 to 1237 shows a compositional bias: basic and acidic residues; sequence SQEKSRDDQTDEGKTSTKKDRFP. Residues 1240–1253 show a composition bias toward basic residues; the sequence is QLHKTKKKAPKVSK.

Promotes the exchange of Ras-bound GDP by GTP. The protein is Guanine nucleotide exchange factor SDC25 (SDC25) of Saccharomyces cerevisiae (Baker's yeast).